The following is a 342-amino-acid chain: Succinylglutamate desuccinylase (342 aa).

Zn(2+) contacts are provided by His64, Glu67, and His159. Residue Glu222 is part of the active site.

The protein belongs to the AspA/AstE family. Succinylglutamate desuccinylase subfamily. It depends on Zn(2+) as a cofactor.

It carries out the reaction N-succinyl-L-glutamate + H2O = L-glutamate + succinate. Its pathway is amino-acid degradation; L-arginine degradation via AST pathway; L-glutamate and succinate from L-arginine: step 5/5. Transforms N(2)-succinylglutamate into succinate and glutamate. This chain is Succinylglutamate desuccinylase, found in Burkholderia orbicola (strain MC0-3).